A 119-amino-acid chain; its full sequence is uncharacterized protein (119 aa).

4 helical membrane-spanning segments follow: residues 3–23, 29–49, 58–78, and 87–107; these read WVFLCLAILFEVAGTVSMKLS, LIPSLLLIFFYGGSLFFLTLT, AYAVWSGMGIVLITVVGFLFF, and VISIGLIIAGVVSLNLIEHVA.

It belongs to the drug/metabolite transporter (DMT) superfamily. Small multidrug resistance (SMR) (TC 2.A.7.1) family.

The protein resides in the cell membrane. This is an uncharacterized protein from Bacillus subtilis (strain 168).